The following is a 428-amino-acid chain: Elongation factor 1-alpha (428 aa).

Residues 5-225 enclose the tr-type G domain; sequence KPILNVAFIG…DAFQPPEKPT (221 aa). Residues 14-21 are G1; sequence GHVDAGKS. A GTP-binding site is contributed by 14 to 21; the sequence is GHVDAGKS. Ser21 provides a ligand contact to Mg(2+). The segment at 70–74 is G2; the sequence is GVTID. The segment at 91 to 94 is G3; that stretch reads DCPG. GTP contacts are provided by residues 91-95 and 149-152; these read DCPGH and NKMD. The G4 stretch occupies residues 149–152; sequence NKMD. Residues 189 to 191 form a G5 region; the sequence is ASL.

The protein belongs to the TRAFAC class translation factor GTPase superfamily. Classic translation factor GTPase family. EF-Tu/EF-1A subfamily.

Its subcellular location is the cytoplasm. The enzyme catalyses GTP + H2O = GDP + phosphate + H(+). In terms of biological role, GTP hydrolase that promotes the GTP-dependent binding of aminoacyl-tRNA to the A-site of ribosomes during protein biosynthesis. The sequence is that of Elongation factor 1-alpha from Methanococcus maripaludis (strain C6 / ATCC BAA-1332).